Here is a 209-residue protein sequence, read N- to C-terminus: Glutathione S-transferase 2 (209 aa).

The GST N-terminal domain maps to 1–81 (MLDFYYLPGS…YLCDQYGDED (81 aa)). Residues Ser-10, 51 to 53 (RTI), and 65 to 67 (ESR) contribute to the glutathione site. A GST C-terminal domain is found at 88–209 (DTIQRAIVNQ…SGAKEFLTYK (122 aa)).

It belongs to the GST superfamily. Theta family. In terms of assembly, homodimer.

The catalysed reaction is RX + glutathione = an S-substituted glutathione + a halide anion + H(+). Conjugation of reduced glutathione to a wide number of exogenous and endogenous hydrophobic electrophiles. This Anopheles gambiae (African malaria mosquito) protein is Glutathione S-transferase 2 (GstD2).